The sequence spans 137 residues: Phospholipase A2 group V (137 aa).

The signal sequence occupies residues 1-20 (MKRLLTLAWFLACSVPAVPG). Cystine bridges form between Cys46–Cys137, Cys48–Cys64, Cys63–Cys117, Cys70–Cys110, Cys79–Cys103, and Cys97–Cys108. Ca(2+) is bound by residues Tyr47, Gly49, and Gly51. His67 is an active-site residue. Residue Asp68 coordinates Ca(2+). Asp111 is an active-site residue.

Belongs to the phospholipase A2 family. Requires Ca(2+) as cofactor. This enzyme lacks one of the seven disulfide bonds found in similar PA2 proteins.

Its subcellular location is the secreted. The protein localises to the cell membrane. The protein resides in the cytoplasmic vesicle. It is found in the phagosome. It localises to the recycling endosome. Its subcellular location is the golgi apparatus. The protein localises to the cis-Golgi network. The protein resides in the trans-Golgi network. It catalyses the reaction a 1,2-diacyl-sn-glycero-3-phosphocholine + H2O = a 1-acyl-sn-glycero-3-phosphocholine + a fatty acid + H(+). It carries out the reaction 1-hexadecanoyl-2-(9Z-octadecenoyl)-sn-glycero-3-phosphocholine + H2O = 1-hexadecanoyl-sn-glycero-3-phosphocholine + (9Z)-octadecenoate + H(+). The catalysed reaction is 1-hexadecanoyl-2-(5Z,8Z,11Z,14Z-eicosatetraenoyl)-sn-glycero-3-phosphocholine + H2O = 1-hexadecanoyl-sn-glycero-3-phosphocholine + (5Z,8Z,11Z,14Z)-eicosatetraenoate + H(+). The enzyme catalyses 1-hexadecanoyl-2-(9Z,12Z-octadecadienoyl)-sn-glycero-3-phosphoethanolamine + H2O = 1-hexadecanoyl-sn-glycero-3-phosphoethanolamine + (9Z,12Z)-octadecadienoate + H(+). It catalyses the reaction 1-hexadecanoyl-2-(5Z,8Z,11Z,14Z-eicosatetraenoyl)-sn-glycero-3-phosphoethanolamine + H2O = 1-hexadecanoyl-sn-glycero-3-phosphoethanolamine + (5Z,8Z,11Z,14Z)-eicosatetraenoate + H(+). It carries out the reaction 1-octadecanoyl-2-(5Z,8Z,11Z,14Z-eicosatetraenoyl)-sn-glycero-3-phospho-(1D-myo-inositol) + H2O = 1-octadecanoyl-sn-glycero-3-phospho-(1D-myo-inositol) + (5Z,8Z,11Z,14Z)-eicosatetraenoate + H(+). The catalysed reaction is 1-hexadecanoyl-2-(9Z-octadecenoyl)-sn-glycero-3-phosphoglycerol + H2O = 1-hexadecanoyl-sn-glycero-3-phosphoglycerol + (9Z)-octadecenoate + H(+). The enzyme catalyses N-hexadecanoyl-1,2-di-(9Z-octadecenoyl)-sn-glycero-3-phosphoethanolamine + H2O = N-hexadecanoyl-1-(9Z-octadecenoyl)-sn-glycero-3-phosphoethanolamine + (9Z)-octadecenoate + H(+). It catalyses the reaction 1'-[1,2-di-(9Z-octadecenoyl)-sn-glycero-3-phospho]-3'-[1-(9Z-octadecenoyl)-sn-glycero-3-phospho]-glycerol + H2O = 1',3'-bis-[1-(9Z-octadecenoyl)-sn-glycero-3-phospho]-glycerol + (9Z)-octadecenoate + H(+). It carries out the reaction 1',3'-bis[1,2-di-(9Z-octadecenoyl)-sn-glycero-3-phospho]-glycerol + H2O = 1'-[1,2-di-(9Z-octadecenoyl)-sn-glycero-3-phospho]-3'-[1-(9Z-octadecenoyl)-sn-glycero-3-phospho]-glycerol + (9Z)-octadecenoate + H(+). It participates in lipid metabolism; phospholipid metabolism. The protein operates within lipid metabolism; leukotriene B4 biosynthesis. It functions in the pathway lipid metabolism; leukotriene C4 biosynthesis. Functionally, secretory calcium-dependent phospholipase A2 that primarily targets extracellular phospholipids. Hydrolyzes the ester bond of the fatty acyl group attached at sn-2 position of phospholipids (phospholipase A2 activity), preferentially releasing fatty acyl groups with a low degree of unsaturation such as oleoyl (C18:1) and linoleoyl (C18:2) groups. Hydrolyzes low-density lipoprotein (LDL) phospholipids releasing unsaturated fatty acids that drive macrophage polarization toward an M2 phenotype. May act in an autocrine and paracrine manner. Contributes to lipid remodeling of cellular membranes at different subcellular locations and generation of lipid mediators involved in pathogen clearance. Cleaves sn-2 fatty acyl chains of cardiolipin, a major component of the inner membrane of mitochondria and bacterial membranes. Promotes phagocytosis of bacteria in macrophages through production of lysophosphatidylethanolamines. Displays bactericidal activity against Gram-positive bacteria by directly hydrolyzing phospholipids of the bacterial membrane. Promotes phagocytosis and killing of ingested fungi likely through controlling phagosome-lysosome fusion and phagosome maturation. Plays a role in biosynthesis of cysteinyl leukotrienes (CysLTs) in myeloid cells. In eosinophils, triggers perinuclear arachidonate release and LTC4 synthesis in a PLA2G4A-independent way. In neutrophils, amplifies CysLTs biosynthesis initiated by PLA2G4A. Promotes immune complex clearance in macrophages via stimulating synthesis of CysLTs, which act through CYSLTR1 to trigger phagocytosis. May regulate antigen processing in antigen-presenting cells. In pulmonary macrophages regulates IL33 production required for activation of group 2 innate lymphoid cells. May play a role in the biosynthesis of N-acyl ethanolamines that regulate energy metabolism. Hydrolyzes N-acyl phosphatidylethanolamines to N-acyl lysophosphatidylethanolamines, which are further cleaved by a lysophospholipase D to release N-acyl ethanolamines. The sequence is that of Phospholipase A2 group V (Pla2g5) from Rattus norvegicus (Rat).